The chain runs to 127 residues: Spore germination protein 2 (127 aa).

An N-terminal signal peptide occupies residues 1–25 (MNIRNSLILIISTILFFSIINGSLS). Residues asparagine 54 and asparagine 118 are each glycosylated (N-linked (GlcNAc...) asparagine).

It belongs to the Dictyostelium gerABC family.

It localises to the secreted. In Dictyostelium discoideum (Social amoeba), this protein is Spore germination protein 2 (gerB).